Consider the following 371-residue polypeptide: 3-isopropylmalate dehydrogenase B (371 aa).

79-93 is an NAD(+) binding site; sequence GSKVDHIRRGLDGPE. 4 residues coordinate substrate: Arg100, Arg110, Arg142, and Asp229. Asp229, Asp254, and Asp258 together coordinate Mg(2+). 296–308 provides a ligand contact to NAD(+); the sequence is GSAPTIAGKNIAN.

The protein belongs to the isocitrate and isopropylmalate dehydrogenases family. Homodimer. Mg(2+) serves as cofactor. The cofactor is Mn(2+).

The protein resides in the cytoplasm. The enzyme catalyses (2R,3S)-3-isopropylmalate + NAD(+) = 4-methyl-2-oxopentanoate + CO2 + NADH. It functions in the pathway amino-acid biosynthesis; L-leucine biosynthesis; L-leucine from 3-methyl-2-oxobutanoate: step 3/4. Its function is as follows. Catalyzes the oxidation of 3-carboxy-2-hydroxy-4-methylpentanoate (3-isopropylmalate) to 3-carboxy-4-methyl-2-oxopentanoate. The product decarboxylates to 4-methyl-2 oxopentanoate. The polypeptide is 3-isopropylmalate dehydrogenase B (leu2B) (Aspergillus niger).